Reading from the N-terminus, the 273-residue chain is Phosphate import ATP-binding protein PstB (273 aa).

The ABC transporter domain occupies 18-257; it reads ISLQNVTISY…EFDKTKKIFN (240 aa). 50–57 contacts ATP; the sequence is GPSGCGKS.

This sequence belongs to the ABC transporter superfamily. Phosphate importer (TC 3.A.1.7) family. The complex is composed of two ATP-binding proteins (PstB), two transmembrane proteins (PstC and PstA) and a solute-binding protein (PstS).

Its subcellular location is the cell inner membrane. It carries out the reaction phosphate(out) + ATP + H2O = ADP + 2 phosphate(in) + H(+). Its function is as follows. Part of the ABC transporter complex PstSACB involved in phosphate import. Responsible for energy coupling to the transport system. The sequence is that of Phosphate import ATP-binding protein PstB from Prochlorococcus marinus (strain SARG / CCMP1375 / SS120).